The chain runs to 510 residues: Pentatricopeptide repeat-containing protein At1g71060, mitochondrial (510 aa).

The N-terminal 14 residues, 1–14 (MVFSRFFRVTGVNL), are a transit peptide targeting the mitochondrion. 10 PPR repeats span residues 127–157 (TTSNYNALIESLGKIKQFKLIWSLVDDMKAK), 161–195 (SKETFALISRRYARARKVKEAIGAFHKMEEFGFKM), 196–230 (ESSDFNRMLDTLSKSRNVGDAQKVFDKMKKKRFEP), 231–265 (DIKSYTILLEGWGQELNLLRVDEVNREMKDEGFEP), 266–300 (DVVAYGIIINAHCKAKKYEEAIRFFNEMEQRNCKP), 301–335 (SPHIFCSLINGLGSEKKLNDALEFFERSKSSGFPL), 336–370 (EAPTYNALVGAYCWSQRMEDAYKTVDEMRLKGVGP), 371–401 (NARTYDIILHHLIRMQRSKEAYEVYQTMSCE), 403–437 (TVSTYEIMVRMFCNKERLDMAIKIWDEMKGKGVLP), and 438–472 (GMHMFSSLITALCHENKLDEACEYFNEMLDVGIRP).

This sequence belongs to the PPR family. P subfamily.

It localises to the mitochondrion. The protein is Pentatricopeptide repeat-containing protein At1g71060, mitochondrial of Arabidopsis thaliana (Mouse-ear cress).